The sequence spans 622 residues: 1-deoxy-D-xylulose-5-phosphate synthase (622 aa).

Thiamine diphosphate contacts are provided by residues histidine 80 and 121–123 (GHS). Aspartate 152 is a Mg(2+) binding site. Thiamine diphosphate-binding positions include 153–154 (GA), asparagine 181, tyrosine 288, and glutamate 370. Asparagine 181 is a Mg(2+) binding site.

This sequence belongs to the transketolase family. DXPS subfamily. Homodimer. Requires Mg(2+) as cofactor. Thiamine diphosphate is required as a cofactor.

It carries out the reaction D-glyceraldehyde 3-phosphate + pyruvate + H(+) = 1-deoxy-D-xylulose 5-phosphate + CO2. The protein operates within metabolic intermediate biosynthesis; 1-deoxy-D-xylulose 5-phosphate biosynthesis; 1-deoxy-D-xylulose 5-phosphate from D-glyceraldehyde 3-phosphate and pyruvate: step 1/1. Functionally, catalyzes the acyloin condensation reaction between C atoms 2 and 3 of pyruvate and glyceraldehyde 3-phosphate to yield 1-deoxy-D-xylulose-5-phosphate (DXP). In Shewanella sp. (strain MR-4), this protein is 1-deoxy-D-xylulose-5-phosphate synthase.